The sequence spans 429 residues: Glucose-6-phosphate isomerase (429 aa).

Glu-282 acts as the Proton donor in catalysis. Residues His-303 and Lys-418 contribute to the active site.

It belongs to the GPI family.

It is found in the cytoplasm. It catalyses the reaction alpha-D-glucose 6-phosphate = beta-D-fructose 6-phosphate. It participates in carbohydrate biosynthesis; gluconeogenesis. Its pathway is carbohydrate degradation; glycolysis; D-glyceraldehyde 3-phosphate and glycerone phosphate from D-glucose: step 2/4. Functionally, catalyzes the reversible isomerization of glucose-6-phosphate to fructose-6-phosphate. This chain is Glucose-6-phosphate isomerase, found in Mesomycoplasma hyopneumoniae (strain 232) (Mycoplasma hyopneumoniae).